The primary structure comprises 325 residues: GTP 3',8-cyclase (325 aa).

The region spanning 10-229 (GYGRRINYLR…PSLEKIKSED (220 aa)) is the Radical SAM core domain. GTP is bound at residue arginine 19. Cysteine 26 and cysteine 30 together coordinate [4Fe-4S] cluster. Tyrosine 32 is a binding site for S-adenosyl-L-methionine. Cysteine 33 contacts [4Fe-4S] cluster. Residue arginine 69 coordinates GTP. An S-adenosyl-L-methionine-binding site is contributed by glycine 73. Threonine 100 lines the GTP pocket. Serine 124 contributes to the S-adenosyl-L-methionine binding site. Lysine 161 contacts GTP. Methionine 195 contributes to the S-adenosyl-L-methionine binding site. The [4Fe-4S] cluster site is built by cysteine 257 and cysteine 260. 262–264 (RLR) lines the GTP pocket. [4Fe-4S] cluster is bound at residue cysteine 274.

Belongs to the radical SAM superfamily. MoaA family. In terms of assembly, monomer and homodimer. [4Fe-4S] cluster is required as a cofactor.

The enzyme catalyses GTP + AH2 + S-adenosyl-L-methionine = (8S)-3',8-cyclo-7,8-dihydroguanosine 5'-triphosphate + 5'-deoxyadenosine + L-methionine + A + H(+). The protein operates within cofactor biosynthesis; molybdopterin biosynthesis. In terms of biological role, catalyzes the cyclization of GTP to (8S)-3',8-cyclo-7,8-dihydroguanosine 5'-triphosphate. This Peptoclostridium acidaminophilum (Eubacterium acidaminophilum) protein is GTP 3',8-cyclase.